We begin with the raw amino-acid sequence, 314 residues long: Hydroxyacyl-coenzyme A dehydrogenase, mitochondrial (314 aa).

Residues 1 to 12 constitute a mitochondrion transit peptide; sequence MAFATRQLVRSL. NAD(+) is bound by residues 34–39 and D57; that span reads GGGLMG. CoA contacts are provided by S73 and K80. K80 bears the N6-succinyllysine mark. Residues K81 and K87 each carry the N6-acetyllysine; alternate modification. K81 and K87 each carry N6-succinyllysine; alternate. E122 contacts NAD(+). K125 bears the N6-acetyllysine mark. K127 is a binding site for NAD(+). N6-(2-hydroxyisobutyryl)lysine is present on K127. Position 136 is an N6-acetyllysine; alternate (K136). Position 136 is an N6-succinyllysine; alternate (K136). NAD(+)-binding residues include S149 and N173. A CoA-binding site is contributed by S149. K179 is subject to N6-acetyllysine. Residues K185, K192, and K202 each carry the N6-acetyllysine; alternate modification. 3 positions are modified to N6-succinyllysine; alternate: K185, K192, and K202. K206 is modified (N6-succinyllysine). 2 positions are modified to N6-acetyllysine; alternate: K212 and K241. Residues K212 and K241 each carry the N6-succinyllysine; alternate modification. Residue K305 participates in NAD(+) binding. K312 carries the post-translational modification N6-acetyllysine; alternate. K312 is modified (N6-succinyllysine; alternate).

Belongs to the 3-hydroxyacyl-CoA dehydrogenase family. In terms of assembly, homodimer. Interacts with GLUD1; this interaction inhibits the activation of glutamate dehydrogenase 1 (GLUD1). In terms of processing, succinylation at Lys-81, adjacent to a coenzyme A binding site. Desuccinylated by SIRT5.

Its subcellular location is the mitochondrion matrix. It catalyses the reaction a (3S)-3-hydroxyacyl-CoA + NAD(+) = a 3-oxoacyl-CoA + NADH + H(+). The enzyme catalyses (3S)-3-hydroxybutanoyl-CoA + NAD(+) = acetoacetyl-CoA + NADH + H(+). The catalysed reaction is (3S)-hydroxydecanoyl-CoA + NAD(+) = 3-oxodecanoyl-CoA + NADH + H(+). It carries out the reaction (3S)-hydroxyhexadecanoyl-CoA + NAD(+) = 3-oxohexadecanoyl-CoA + NADH + H(+). The protein operates within lipid metabolism; fatty acid beta-oxidation. Its function is as follows. Mitochondrial fatty acid beta-oxidation enzyme that catalyzes the third step of the beta-oxidation cycle for medium and short-chain 3-hydroxy fatty acyl-CoAs (C4 to C10). Plays a role in the control of insulin secretion by inhibiting the activation of glutamate dehydrogenase 1 (GLUD1), an enzyme that has an important role in regulating amino acid-induced insulin secretion. Plays a role in the maintenance of normal spermatogenesis through the reduction of fatty acid accumulation in the testes. This is Hydroxyacyl-coenzyme A dehydrogenase, mitochondrial (HADH) from Sus scrofa (Pig).